Here is a 302-residue protein sequence, read N- to C-terminus: Oxygen-dependent coproporphyrinogen-III oxidase (302 aa).

S94 contacts substrate. H98 and H108 together coordinate a divalent metal cation. H108 serves as the catalytic Proton donor. Residue 110–112 (NVR) coordinates substrate. A divalent metal cation-binding residues include H147 and H177. Residues 242-277 (YVEFNLVWDRGTLFGLQSGGRTESILMSMPPLVRWE) are important for dimerization. 260 to 262 (GGR) contributes to the substrate binding site.

The protein belongs to the aerobic coproporphyrinogen-III oxidase family. As to quaternary structure, homodimer. The cofactor is a divalent metal cation.

The protein resides in the cytoplasm. The catalysed reaction is coproporphyrinogen III + O2 + 2 H(+) = protoporphyrinogen IX + 2 CO2 + 2 H2O. Its pathway is porphyrin-containing compound metabolism; protoporphyrin-IX biosynthesis; protoporphyrinogen-IX from coproporphyrinogen-III (O2 route): step 1/1. Involved in the heme biosynthesis. Catalyzes the aerobic oxidative decarboxylation of propionate groups of rings A and B of coproporphyrinogen-III to yield the vinyl groups in protoporphyrinogen-IX. This is Oxygen-dependent coproporphyrinogen-III oxidase from Chromobacterium violaceum (strain ATCC 12472 / DSM 30191 / JCM 1249 / CCUG 213 / NBRC 12614 / NCIMB 9131 / NCTC 9757 / MK).